Here is a 1050-residue protein sequence, read N- to C-terminus: MKDAERIPGPKPLPVVGNLLDIDPEHGLQSIIAFADKYGPLFQITINGEKQIFATSQALVDELCDESRFHKAVVTGLEVLRLLAHDGLFTAYHGERGWGIAHRILVPAFGPLRIRNMLDDMSDVAQQLCLKWARQGGSTSINITEDFTRLTLDTIALCTMGFRLNSFYNNETMHPFVQSMLYVLKEADVQANLPGIANSIRVSAQRRMHKNIEAMRTMARGIIQERRKNKNPVDDILNTLLNGRDPVTGEGMSDDSIIDNVITFLIAGHETTSGLLSFTFYFLIQHPHILKKAQEEVDETVGLAQISAQHLAELPYIDAILKESLRLMPTAPGFAVTPKKTEVLGGKWMINAGQPVNVLLPACLRDQSVFGPDADEFHPERMLAENFSKLPPNSWKPFGNGERGCIGRAFAWQEAQLVVAMILQTFDLVPDDPSYQLRIKETLTIKPDGFRIRALLRRGQTATGLSRRSMLVARDGSSGESSNHLAEARGDHAPARGQPVSFFYGSNSGTCKALAHQLASNMMSRGYTTQKLAPLDNAVGNLPRDQPVIILTTTYDGQPTDDAKKFVAWLETGNVPSLQGISYAVFGCGHHDWTQTFYRIPILIDDLMHKAGATRLAPRGAANAAVSDLFSDLEAWEETSLLPALRENFLPSNSTDFDPLNPHQIQLSLSKPRRVDLHKGLIEAKVTAVRVLTSPDTPEKRHLEFCFQGDTSLRPGDHLNILPVNPPSTVSRVLAQFNLAPDYNITVNSFNTLGLPQATPVSASELFSSYVELCQPATRNNLKALIAATQSDPDKQELNRLYDSYEFIVRDKRVSVLDLLEQFPSISLPIAAFISMLPALRVRTYSLSMAPSFKPSHSSLTFSVINEPAWRGSGQHLGVASNYLASLTSGSIFYFSPRPAKESFHLPKDPSNTPIIMICAGSGLAPFLSFIQDRMVLKQQYKPLAKAFLFFGCRGRSLDDLYHEELSEFEAAGVVEIRRAYSKTPDFDIAKGCRYVQHRLVTEGQAILSLWSQNATIYVCGSTNMAKGVEAVLQNMLGPLPKERYVTEIF.

Cys405 provides a ligand contact to heme. The tract at residues 467–491 (RRSMLVARDGSSGESSNHLAEARGD) is disordered. Residues 500-641 (VSFFYGSNSG…DLEAWEETSL (142 aa)) form the Flavodoxin-like domain. FMN-binding positions include 506-510 (SNSGT) and 585-617 (VFGC…TRLA). An FAD-binding FR-type domain is found at 679–907 (KGLIEAKVTA…RPAKESFHLP (229 aa)).

This sequence in the N-terminal section; belongs to the cytochrome P450 family. The cofactor is FAD. FMN serves as cofactor. Heme is required as a cofactor.

The catalysed reaction is 2 oxidized [cytochrome P450] + NADPH = 2 reduced [cytochrome P450] + NADP(+) + H(+). It carries out the reaction an organic molecule + reduced [NADPH--hemoprotein reductase] + O2 = an alcohol + oxidized [NADPH--hemoprotein reductase] + H2O + H(+). It catalyses the reaction dodecanoate + reduced [NADPH--hemoprotein reductase] + O2 = 5-hydroxydodecanoate + oxidized [NADPH--hemoprotein reductase] + H2O + H(+). The enzyme catalyses tetradecanoate + reduced [NADPH--hemoprotein reductase] + O2 = 7-hydroxytetradecanoate + oxidized [NADPH--hemoprotein reductase] + H2O + H(+). The catalysed reaction is dodecan-1-ol + reduced [NADPH--hemoprotein reductase] + O2 = 1,5-dodecanediol + oxidized [NADPH--hemoprotein reductase] + H2O + H(+). It carries out the reaction dodecan-1-ol + reduced [NADPH--hemoprotein reductase] + O2 = 1,4-dodecanediol + oxidized [NADPH--hemoprotein reductase] + H2O + H(+). It catalyses the reaction dodecan-1-ol + reduced [NADPH--hemoprotein reductase] + O2 = 1,6-dodecanediol + oxidized [NADPH--hemoprotein reductase] + H2O + H(+). Functionally, self-sufficient cytochrome P450 monooxygenase that catalyzes the regioselective in-chain hydroxylation of alkanes, fatty alcohols, and fatty acids at the omega-7 position. Performs hydroxylation of C10-C16 n-alkanes and C12 and C14 fatty alcohols; and thereby enables the one step biocatalytic synthesis of rare alcohols such as 5-dodecanol and 7-tetradecanol. Converts 1-dodecanol into 1,5-dodecanediol as major product with very little sub-terminally hydroxylated products with the 1,4-dodecanediol and 1,6-dodecanediol more abundant. Converts dodecanoic acid to 5-hydroxydodecanoic acid which can be further converted into delta-dodecalactone by lactonization of the 5-hydroxy acid at low pH. Also gives sub-terminal hydroxylation of dodecanoic acid with 9-hydroxydodecanoic acid being the second most abundant product. This is Self-sufficient cytochrome P450 monooxygenase CYP505E5 from Aspergillus niger.